We begin with the raw amino-acid sequence, 549 residues long: Dihydroxy-acid dehydratase (549 aa).

Aspartate 78 contributes to the Mg(2+) binding site. Position 119 (cysteine 119) interacts with [2Fe-2S] cluster. Aspartate 120 and lysine 121 together coordinate Mg(2+). Position 121 is an N6-carboxylysine (lysine 121). [2Fe-2S] cluster is bound at residue cysteine 191. Glutamate 441 contacts Mg(2+). The Proton acceptor role is filled by serine 466.

This sequence belongs to the IlvD/Edd family. In terms of assembly, homodimer. The cofactor is [2Fe-2S] cluster. Requires Mg(2+) as cofactor.

It catalyses the reaction (2R)-2,3-dihydroxy-3-methylbutanoate = 3-methyl-2-oxobutanoate + H2O. The enzyme catalyses (2R,3R)-2,3-dihydroxy-3-methylpentanoate = (S)-3-methyl-2-oxopentanoate + H2O. It participates in amino-acid biosynthesis; L-isoleucine biosynthesis; L-isoleucine from 2-oxobutanoate: step 3/4. It functions in the pathway amino-acid biosynthesis; L-valine biosynthesis; L-valine from pyruvate: step 3/4. In terms of biological role, functions in the biosynthesis of branched-chain amino acids. Catalyzes the dehydration of (2R,3R)-2,3-dihydroxy-3-methylpentanoate (2,3-dihydroxy-3-methylvalerate) into 2-oxo-3-methylpentanoate (2-oxo-3-methylvalerate) and of (2R)-2,3-dihydroxy-3-methylbutanoate (2,3-dihydroxyisovalerate) into 2-oxo-3-methylbutanoate (2-oxoisovalerate), the penultimate precursor to L-isoleucine and L-valine, respectively. The protein is Dihydroxy-acid dehydratase of Methanothermobacter thermautotrophicus (strain ATCC 29096 / DSM 1053 / JCM 10044 / NBRC 100330 / Delta H) (Methanobacterium thermoautotrophicum).